Reading from the N-terminus, the 225-residue chain is Viral late gene transcription factor 3 (225 aa).

The segment at 7 to 27 (CSNCKHNGLITESNHEFCIFC) is a zinc-finger region.

Belongs to the nucleo-cytoplasmic large DNA viruses (NCLDVs) VLTF-3 family. As to quaternary structure, interacts with the late transcription elongation factor H5/VLTF-4. Interacts with the late transcription factors VLTF-1.

In terms of biological role, acts with RNA polymerase to initiate transcription from late gene promoters. This chain is Viral late gene transcription factor 3 (VLTF3), found in Fowlpox virus (strain NVSL) (FPV).